A 435-amino-acid chain; its full sequence is Eukaryotic translation initiation factor 3 subunit E (435 aa).

In terms of domain architecture, PCI spans 219-392 (FFNHAKGRDL…GHVVMGTQPL (174 aa)).

It belongs to the eIF-3 subunit E family. In terms of assembly, component of the eukaryotic translation initiation factor 3 (eIF-3) complex.

Its subcellular location is the cytoplasm. In terms of biological role, component of the eukaryotic translation initiation factor 3 (eIF-3) complex, which is involved in protein synthesis of a specialized repertoire of mRNAs and, together with other initiation factors, stimulates binding of mRNA and methionyl-tRNAi to the 40S ribosome. The eIF-3 complex specifically targets and initiates translation of a subset of mRNAs involved in cell proliferation. The sequence is that of Eukaryotic translation initiation factor 3 subunit E (eIF3-S6) from Aedes aegypti (Yellowfever mosquito).